Reading from the N-terminus, the 237-residue chain is Ribonuclease PH (237 aa).

Residues Arg-86 and 124 to 126 (GTR) contribute to the phosphate site.

This sequence belongs to the RNase PH family. As to quaternary structure, homohexameric ring arranged as a trimer of dimers.

The catalysed reaction is tRNA(n+1) + phosphate = tRNA(n) + a ribonucleoside 5'-diphosphate. In terms of biological role, phosphorolytic 3'-5' exoribonuclease that plays an important role in tRNA 3'-end maturation. Removes nucleotide residues following the 3'-CCA terminus of tRNAs; can also add nucleotides to the ends of RNA molecules by using nucleoside diphosphates as substrates, but this may not be physiologically important. Probably plays a role in initiation of 16S rRNA degradation (leading to ribosome degradation) during starvation. The polypeptide is Ribonuclease PH (Shewanella loihica (strain ATCC BAA-1088 / PV-4)).